We begin with the raw amino-acid sequence, 165 residues long: Phosphopantetheine adenylyltransferase (165 aa).

Thr-11 provides a ligand contact to substrate. Residues 11–12 and His-19 each bind ATP; that span reads TF. Substrate contacts are provided by Lys-43, Val-75, and Arg-89. ATP-binding positions include 90–92, Glu-100, and 125–131; these read GLR and YQFISST.

This sequence belongs to the bacterial CoaD family. Homohexamer. Requires Mg(2+) as cofactor.

It localises to the cytoplasm. It carries out the reaction (R)-4'-phosphopantetheine + ATP + H(+) = 3'-dephospho-CoA + diphosphate. The protein operates within cofactor biosynthesis; coenzyme A biosynthesis; CoA from (R)-pantothenate: step 4/5. Functionally, reversibly transfers an adenylyl group from ATP to 4'-phosphopantetheine, yielding dephospho-CoA (dPCoA) and pyrophosphate. The polypeptide is Phosphopantetheine adenylyltransferase (Acidovorax ebreus (strain TPSY) (Diaphorobacter sp. (strain TPSY))).